The chain runs to 251 residues: tRNA pseudouridine synthase A (251 aa).

Aspartate 56 serves as the catalytic Nucleophile. Tyrosine 110 is a binding site for substrate.

Belongs to the tRNA pseudouridine synthase TruA family.

The catalysed reaction is uridine(38/39/40) in tRNA = pseudouridine(38/39/40) in tRNA. In terms of biological role, formation of pseudouridine at positions 38, 39 and 40 in the anticodon stem and loop of transfer RNAs. The protein is tRNA pseudouridine synthase A of Picrophilus torridus (strain ATCC 700027 / DSM 9790 / JCM 10055 / NBRC 100828 / KAW 2/3).